The primary structure comprises 247 residues: Submandibular gland secretory Glx-rich protein CB (247 aa).

A signal peptide spans 1-18; it reads MLVVLLTAALLALSSAQG. A disordered region spans residues 14-219; sequence SSAQGTDEEV…PQHYRGRPPK (206 aa). Low complexity-rich tracts occupy residues 39-50, 58-71, 81-93, 104-116, 126-139, 150-159, and 178-196; these read PVDSGSDPPSAD, EGESAPPANEEPPA, QQEPTQAENQEPP, QQQQPTQAENQEPP, QQESTQAENQ, and VESPPSSPENSQEQPQQTN. A run of 5 repeats spans residues 67–89, 90–112, 113–135, 136–158, and 159–181. A 5 X 23 AA tandem repeats region spans residues 67–181; that stretch reads EEPPATSGSE…QPEEGNVESP (115 aa). A compositionally biased stretch (basic and acidic residues) spans 197-212; the sequence is PEEKPPAPKTQEEPQH.

As to expression, submandibular gland acinar cells.

It is found in the secreted. GRP proteins have a marked affinity for hydroxyapatite. They may play a role in the formation of the protective acquired pellicle at the saliva-tooth interface. In Rattus norvegicus (Rat), this protein is Submandibular gland secretory Glx-rich protein CB (Grpcb).